The primary structure comprises 179 residues: Crossover junction endodeoxyribonuclease RuvC (179 aa).

Active-site residues include D7, E67, and D140. 3 residues coordinate Mg(2+): D7, E67, and D140.

Belongs to the RuvC family. As to quaternary structure, homodimer which binds Holliday junction (HJ) DNA. The HJ becomes 2-fold symmetrical on binding to RuvC with unstacked arms; it has a different conformation from HJ DNA in complex with RuvA. In the full resolvosome a probable DNA-RuvA(4)-RuvB(12)-RuvC(2) complex forms which resolves the HJ. Mg(2+) serves as cofactor.

It is found in the cytoplasm. The enzyme catalyses Endonucleolytic cleavage at a junction such as a reciprocal single-stranded crossover between two homologous DNA duplexes (Holliday junction).. Functionally, the RuvA-RuvB-RuvC complex processes Holliday junction (HJ) DNA during genetic recombination and DNA repair. Endonuclease that resolves HJ intermediates. Cleaves cruciform DNA by making single-stranded nicks across the HJ at symmetrical positions within the homologous arms, yielding a 5'-phosphate and a 3'-hydroxyl group; requires a central core of homology in the junction. The consensus cleavage sequence is 5'-(A/T)TT(C/G)-3'. Cleavage occurs on the 3'-side of the TT dinucleotide at the point of strand exchange. HJ branch migration catalyzed by RuvA-RuvB allows RuvC to scan DNA until it finds its consensus sequence, where it cleaves and resolves the cruciform DNA. The sequence is that of Crossover junction endodeoxyribonuclease RuvC from Salinibacter ruber (strain DSM 13855 / M31).